The chain runs to 37 residues: Large ribosomal subunit protein bL36 (37 aa).

The protein belongs to the bacterial ribosomal protein bL36 family.

In Mycoplasmoides gallisepticum (strain R(low / passage 15 / clone 2)) (Mycoplasma gallisepticum), this protein is Large ribosomal subunit protein bL36 (rpmJ).